The chain runs to 627 residues: Phosphomethylpyrimidine synthase (627 aa).

Positions 1 to 24 (MSATQKNNITRLEQLDRQSTQPFP) are enriched in polar residues. The tract at residues 1-29 (MSATQKNNITRLEQLDRQSTQPFPNSRKV) is disordered. Residues Asn231, Met260, Tyr289, His325, 345 to 347 (SRG), 386 to 389 (DGLR), and Glu425 each bind substrate. His429 is a binding site for Zn(2+). Position 452 (Tyr452) interacts with substrate. His493 is a Zn(2+) binding site. 3 residues coordinate [4Fe-4S] cluster: Cys573, Cys576, and Cys581.

Belongs to the ThiC family. Homodimer. [4Fe-4S] cluster is required as a cofactor.

The catalysed reaction is 5-amino-1-(5-phospho-beta-D-ribosyl)imidazole + S-adenosyl-L-methionine = 4-amino-2-methyl-5-(phosphooxymethyl)pyrimidine + CO + 5'-deoxyadenosine + formate + L-methionine + 3 H(+). Its pathway is cofactor biosynthesis; thiamine diphosphate biosynthesis. Functionally, catalyzes the synthesis of the hydroxymethylpyrimidine phosphate (HMP-P) moiety of thiamine from aminoimidazole ribotide (AIR) in a radical S-adenosyl-L-methionine (SAM)-dependent reaction. In Pseudomonas paraeruginosa (strain DSM 24068 / PA7) (Pseudomonas aeruginosa (strain PA7)), this protein is Phosphomethylpyrimidine synthase.